A 599-amino-acid polypeptide reads, in one-letter code: Putative ATP-dependent helicase YeeB (599 aa).

One can recognise a Helicase ATP-binding domain in the interval 30–207; the sequence is AFEKRNSQYL…LLPEDEELFD (178 aa). 43-50 contacts ATP; it reads APPASGKS. A DEAH box motif is present at residues 154–157; it reads DEFH. The 173-residue stretch at 236-408 folds into the Helicase C-terminal domain; that stretch reads QYTSAINEVL…TVNTMLKAIS (173 aa).

Belongs to the helicase family.

This chain is Putative ATP-dependent helicase YeeB (yeeB), found in Bacillus subtilis (strain 168).